Reading from the N-terminus, the 2215-residue chain is Unconventional myosin-VIIa (2215 aa).

A Myosin motor domain is found at 65 to 741 (HGVEDMIRLG…HDMLLEVERD (677 aa)). An ATP-binding site is contributed by 158–165 (GESGAGKT). The tract at residues 632 to 639 (FVRCIKPN) is actin-binding. IQ domains are found at residues 745–765 (TDRVILLQKVIRGFKDRSNFL), 768–788 (KSAATLIQRHWRGHHCRKNYE), 791–811 (RLGFLRLQALHRSRKLHKQYR), 814–834 (RQRIIEFQARCRAYLVRKAFR), and 837–857 (LWAVITVQAYARGMIARRLHR). The interval 858–935 (RLRVEYQRRL…LEQMEKARHE (78 aa)) is SAH. One can recognise a MyTH4 1 domain in the interval 1017–1253 (YTRRPLKQPL…PSWLELQATK (237 aa)). An FERM 1 domain is found at 1258-1602 (IMLPVTFMDG…LVVTFLEGLR (345 aa)). Residue Thr-1563 is modified to Phosphothreonine. Ser-1569 carries the post-translational modification Phosphoserine. Thr-1571 carries the phosphothreonine modification. The SH3 domain occupies 1603 to 1672 (KRSKYVVALQ…PTDCVYVMPT (70 aa)). Residues 1747-1896 (HTREPLKQAL…PHLVEVEAIQ (150 aa)) enclose the MyTH4 2 domain. The FERM 2 domain maps to 1902–2205 (IFHKVYFPDD…SYISQMLTAM (304 aa)).

The protein belongs to the TRAFAC class myosin-kinesin ATPase superfamily. Myosin family. As to quaternary structure, might homodimerize in a two headed molecule through the formation of a coiled-coil rod. Identified in a complex with USH1C and USH1G. Interacts with MYRIP. Interacts with RPE65. Interacts with CIB2. May interact with CALM. Interacts with WHRN. Interacts with PLEKHB1 (via PH domain). Interacts with PCDH15. Interacts with TWF2. Interacts with USH1G. Interacts with MYH9. Interacts (via MyTH4-FERM domains) with cytoplasmic regions of ADGRV1 and USH2A. Interacts with PDZD7 (via MyTH4-FERM domains). Interacts with CALML4. Detected in mechanosensory stereocilia of cochlea hair cells (at protein level). Expressed in the retina, cochlea, kidney and liver.

The protein resides in the cytoplasm. It localises to the cell cortex. It is found in the cytoskeleton. The protein localises to the synapse. Its function is as follows. Myosins are actin-based motor molecules with ATPase activity. Unconventional myosins serve in intracellular movements. Their highly divergent tails bind to membranous compartments, which are then moved relative to actin filaments. In the retina, plays an important role in the renewal of the outer photoreceptor disks. Plays an important role in the distribution and migration of retinal pigment epithelial (RPE) melanosomes and phagosomes, and in the regulation of opsin transport in retinal photoreceptors. Mediates intracellular transport of RPE65 in the retina pigment epithelium. In the inner ear, plays an important role in differentiation, morphogenesis and organization of cochlear hair cell bundles. Motor protein that is a part of the functional network formed by USH1C, USH1G, CDH23 and MYO7A that mediates mechanotransduction in cochlear hair cells. Required for normal hearing. Involved in hair-cell vesicle trafficking of aminoglycosides, which are known to induce ototoxicity. The chain is Unconventional myosin-VIIa (Myo7a) from Mus musculus (Mouse).